We begin with the raw amino-acid sequence, 432 residues long: Bouquet formation protein 4 (432 aa).

A disordered region spans residues 1–21 (MTENEKSRSLPAERNPLYKDD). The HTH APSES-type domain maps to 38–147 (EFPDGPATFV…SSTPSTYATP (110 aa)). Positions 73–94 (ATSMFRSAFPKATQEEEDLEMR) form a DNA-binding region, H-T-H motif. 2 stretches are compositionally biased toward low complexity: residues 139–152 (STPSTYATPSRPTA) and 163–172 (ESSTSATTTS). Disordered stretches follow at residues 139–283 (STPS…GKIR) and 364–384 (KSSIRSSPKSKKRSREDFEEN). A compositionally biased stretch (basic and acidic residues) spans 180–228 (RLAEHLENSKKTILQHDNKEEDKEIHSEENETKDEIKSEKKEPEIKKQE). Polar residues predominate over residues 229-241 (GGSSTEKVGQPSS).

As to quaternary structure, interacts with rap1.

It is found in the cytoplasm. Its subcellular location is the nucleus. It localises to the nucleus inner membrane. Connects telomeres to the nuclear envelop (NE) during both vegetative growth and meiosis. This connection ensures clustering of telomeres to the spindle pole body (SPB) when cells enter meiotic prophase. The sequence is that of Bouquet formation protein 4 (bqt4) from Schizosaccharomyces pombe (strain 972 / ATCC 24843) (Fission yeast).